Here is a 511-residue protein sequence, read N- to C-terminus: Cobyric acid synthase (511 aa).

Residues 251 to 443 (LLDIAIICLP…IHGIFDNDIF (193 aa)) enclose the GATase cobBQ-type domain. Cys332 serves as the catalytic Nucleophile. Residue His435 is part of the active site.

Belongs to the CobB/CobQ family. CobQ subfamily.

The protein operates within cofactor biosynthesis; adenosylcobalamin biosynthesis. Its function is as follows. Catalyzes amidations at positions B, D, E, and G on adenosylcobyrinic A,C-diamide. NH(2) groups are provided by glutamine, and one molecule of ATP is hydrogenolyzed for each amidation. The protein is Cobyric acid synthase of Listeria innocua serovar 6a (strain ATCC BAA-680 / CLIP 11262).